The chain runs to 361 residues: Ribosomal RNA large subunit methyltransferase M (361 aa).

S-adenosyl-L-methionine is bound by residues Ser-193, 226–229 (CPGG), Asp-245, Asp-265, and Asp-283. The active-site Proton acceptor is Lys-312.

This sequence belongs to the class I-like SAM-binding methyltransferase superfamily. RNA methyltransferase RlmE family. RlmM subfamily. As to quaternary structure, monomer.

It localises to the cytoplasm. The catalysed reaction is cytidine(2498) in 23S rRNA + S-adenosyl-L-methionine = 2'-O-methylcytidine(2498) in 23S rRNA + S-adenosyl-L-homocysteine + H(+). Functionally, catalyzes the 2'-O-methylation at nucleotide C2498 in 23S rRNA. The polypeptide is Ribosomal RNA large subunit methyltransferase M (Histophilus somni (strain 129Pt) (Haemophilus somnus)).